The sequence spans 132 residues: Small ribosomal subunit protein uS8 (132 aa).

Belongs to the universal ribosomal protein uS8 family. Part of the 30S ribosomal subunit. Contacts proteins S5 and S12.

In terms of biological role, one of the primary rRNA binding proteins, it binds directly to 16S rRNA central domain where it helps coordinate assembly of the platform of the 30S subunit. The sequence is that of Small ribosomal subunit protein uS8 from Caulobacter vibrioides (strain ATCC 19089 / CIP 103742 / CB 15) (Caulobacter crescentus).